Reading from the N-terminus, the 113-residue chain is FK506-binding protein 1B (113 aa).

Positions 19–113 (GQTVVIEYTG…IFDVYLKGLQ (95 aa)) constitute a PPIase FKBP-type domain.

This sequence belongs to the FKBP-type PPIase family. FKBP1 subfamily.

It is found in the cytoplasm. It catalyses the reaction [protein]-peptidylproline (omega=180) = [protein]-peptidylproline (omega=0). Its activity is regulated as follows. Inhibited by both FK506 and rapamycin. Its function is as follows. PPIases accelerate the folding of proteins. It catalyzes the cis-trans isomerization of proline imidic peptide bonds in oligopeptides. This chain is FK506-binding protein 1B (fkr-3), found in Neurospora crassa (strain ATCC 24698 / 74-OR23-1A / CBS 708.71 / DSM 1257 / FGSC 987).